The following is a 965-amino-acid chain: Probable ion channel POLLUX (965 aa).

Over residues 1 to 11 (MAESDGGEASP) the composition is skewed to low complexity. Disordered stretches follow at residues 1-76 (MAES…APRG) and 108-158 (GPHA…KSLA). Residues 32 to 42 (LTKSRTISGSA) are compositionally biased toward polar residues. 2 stretches are compositionally biased toward low complexity: residues 52 to 66 (SNSS…SSTA) and 118 to 149 (RSQQ…ASVS). A run of 4 helical transmembrane segments spans residues 187-207 (LSPY…LAIW), 251-271 (ADWN…VFLV), 317-337 (LALL…LYVV), and 369-389 (IVSV…LGLV). 2 RCK N-terminal domains span residues 410-551 (VNHI…ETVV) and 670-818 (PEKI…DKSI).

The protein belongs to the castor/pollux (TC 1.A.1.23) family. Expressed in roots, leaves, stems and panicles.

The protein localises to the nucleus membrane. Functionally, required for mycorrhizal symbiosis. This is Probable ion channel POLLUX from Oryza sativa subsp. japonica (Rice).